The chain runs to 407 residues: Putative glucose/galactose transporter (407 aa).

Transmembrane regions (helical) follow at residues 11–31 (GSLT…DILI), 47–67 (LIQF…GNVI), 70–90 (IGYP…CALF), 96–116 (FGSY…IVCL), 139–159 (VQAF…LLIF), 180–200 (VQMP…VMYL), 225–245 (FVFG…IGSF), 263–283 (HYLV…SALM), 300–320 (IILI…ALTF), 321–341 (VGFF…LNLG), 349–369 (GVIS…GVVT), and 378–398 (NLLY…FFAL).

It belongs to the major facilitator superfamily. FHS transporter (TC 2.A.1.7) family.

Its subcellular location is the cell inner membrane. Intake of glucose and galactose. This chain is Putative glucose/galactose transporter (gluP), found in Helicobacter pylori (strain J99 / ATCC 700824) (Campylobacter pylori J99).